The following is a 362-amino-acid chain: Apelin receptor A (362 aa).

The Extracellular segment spans residues 1–37; that stretch reads METEGLSPMLYEDDYYYGNETGLQPCDETDWDFSYSL. N19 is a glycosylation site (N-linked (GlcNAc...) asparagine). Intrachain disulfides connect C26/C286 and C108/C185. Residues 38–58 traverse the membrane as a helical segment; sequence LPVFYMIVFVLGLSGNGVVIF. Topologically, residues 59–76 are cytoplasmic; sequence TVWKSKPKRRSADTYIGN. A helical membrane pass occupies residues 77–97; it reads LALADLAFVVTLPLWATYTAL. Residues 98-110 are Extracellular-facing; it reads GFHWPFGSALCKL. A helical transmembrane segment spans residues 111-131; sequence SSYLVLLNMFASVFCLTCLSF. Over 132–151 the chain is Cytoplasmic; that stretch reads DRYLAIVHSLSSAKLRSRSS. A helical transmembrane segment spans residues 152 to 172; it reads IIVSLAVIWLFSGLLALPSLI. Topologically, residues 173–199 are extracellular; the sequence is LRDTRVEGNNTICDLDFSGVSSKENEN. N-linked (GlcNAc...) asparagine glycosylation occurs at N181. The chain crosses the membrane as a helical span at residues 200-220; that stretch reads FWIGGLSILTTVPGFLLPLLL. Topologically, residues 221 to 248 are cytoplasmic; that stretch reads MTIFYCFIGGKVTMHFQNLKKEEQKKKR. A helical transmembrane segment spans residues 249-269; the sequence is LLKIIITLVVVFAICWLPFHI. Over 270-296 the chain is Extracellular; sequence LKTIHFLDLMGFLELSCSTQNIIVSLH. Residues 297–317 traverse the membrane as a helical segment; that stretch reads PYATCLAYVNSCLNPFLYAFF. At 318 to 362 the chain is on the cytoplasmic side; sequence DLRFRSQCFFFFGFKKVLQGHLSNTSSSLSAQTQKSEIHSLATKV.

The protein belongs to the G-protein coupled receptor 1 family. In terms of tissue distribution, expressed in all blood vessels including the posterior cardinal vein, intersomitic veins and the vitelline vein network. At the gastrula stage, exclusively expressed in the mesodermal layer and at the neurula stage in the lateral plate mesoderm. Larval expression is observed in the endothelium of the primary blood vessels and the forming heart.

It is found in the cell membrane. In terms of biological role, g protein-coupled receptor for peptide hormones apelin (apln) and apelin receptor early endogenous ligand (apela), that plays a role in the regulation of normal cardiovascular function and fluid homeostasis. When acting as apelin receptor, activates both G(i) protein pathway that inhibits adenylate cyclase activity, and the beta-arrestin pathway that promotes internalization of the receptor. Also functions as mechanoreceptor that is activated by pathological stimuli in a G-protein-independent fashion to induce beta-arrestin signaling, hence eliciting cardiac hypertrophy. However, the presence of apelin ligand blunts cardiac hypertrophic induction from APLNR/APJ on response to pathological stimuli. Plays a key role in early development such as gastrulation, blood vessels formation and heart morphogenesis by acting as a receptor for apela hormone, promoting endoderm and mesendoderm cell migration and regulating the migration of cells fated to become myocardial progenitors, respectively. Promotes angioblast migration toward the embryonic midline, i.e. the position of the future vessel formation, during vasculogenesis. May promote sinus venosus (SV)-derived endothelial cells migration into the developing heart to promote coronary blood vessel development. Required for cardiovascular development, particularly for intersomitic vein angiogenesis by acting as a receptor for apln hormone. Also plays a role in various processes in adults such as regulation of blood vessel formation, blood pressure, heart contractility, and heart failure. Acts upstream of the i/o type of G-alpha proteins in the differentiation of endothelium, erythroid cells, myeloid cells and cardiomyocytes. In Xenopus laevis (African clawed frog), this protein is Apelin receptor A (aplnr-a).